A 927-amino-acid chain; its full sequence is F-box only protein 11 (927 aa).

Residues 1–132 (MNSVRAANRR…STSTTENFGH (132 aa)) form a disordered region. The segment covering 7 to 16 (ANRRPRRVSR) has biased composition (basic residues). The span at 17–27 (PRPVQQQQQQP) shows a compositional bias: low complexity. A compositionally biased stretch (pro residues) spans 28-68 (PQQPPPQPPQQQPPQQQPPPPPQQQQQQQPPPPPPPPPPLP). The span at 114-129 (PTKNSMEGASTSTTEN) shows a compositional bias: polar residues. An F-box domain is found at 153-199 (QYLQEKLPDEVVLKIFSYLLEQDLCRAACVCKRFSELANDPILWKRL). PbH1 repeat units follow at residues 395 to 417 (GACP…YITD), 418 to 440 (HAQG…WVKN), 441 to 463 (HGNP…FTFD), 464 to 486 (HGMG…EVKA), 487 to 509 (YANP…YVHE), 510 to 532 (KGRG…WITS), 533 to 555 (NSDP…YIFG), 556 to 578 (DGRG…QIRT), 579 to 601 (NSCP…YVHE), 602 to 624 (KGQG…WVTT), 625 to 647 (GSTP…YFYD), 648 to 670 (NGHG…QIRT), 671 to 693 (GSNP…LVYN), 694 to 716 (SGLG…WIKT), 717 to 739 (DSNP…CIFN), 740 to 762 (GGRG…LIST), 763 to 785 (NSHP…EITN), 786 to 808 (HATA…FLAS), and 809 to 830 (GVNV…EKAV). A UBR-type zinc finger spans residues 833-904 (GQCLYKISSY…LSNPCTLAGE (72 aa)).

In terms of assembly, component of the SCF(FBXO11) complex consisting of CUL1, RBX1, SKP1 and FBXO11. Interacts with CIITA. As to expression, isoform 5 is expressed in keratinocytes, fibroblasts and melanocytes.

The protein resides in the nucleus. Its subcellular location is the chromosome. Its pathway is protein modification; protein ubiquitination. Its function is as follows. Substrate recognition component of a SCF (SKP1-CUL1-F-box protein) E3 ubiquitin-protein ligase complex which mediates the ubiquitination and subsequent proteasomal degradation of target proteins, such as DTL/CDT2, BCL6, SNAI1 and PRDM1/BLIMP1. The SCF(FBXO11) complex mediates ubiquitination and degradation of BCL6, thereby playing a role in the germinal center B-cells terminal differentiation toward memory B-cells and plasma cells. The SCF(FBXO11) complex also mediates ubiquitination and degradation of DTL, an important step for the regulation of TGF-beta signaling, cell migration and the timing of the cell-cycle progression and exit. The SCF(FBXO11) complex also catalyzes ubiquitination and degradation of GSK3B-phosphorylated SNAI1. Binds to and neddylates phosphorylated p53/TP53, inhibiting its transcriptional activity. Plays a role in the regulatiom of erythropoiesis but not myelopoiesis or megakaryopoiesis. Mechanistically, activates erythroid genes by mediating the degradation of BAHD1, a heterochromatin-associated protein that recruits corepressors to H3K27me3 marks. Participates in macrophage cell death and inflammation in response to bacterial toxins by regulating the expression of complement 5a receptor 1/C5AR1 and IL-1beta. Acts as a critical regulator to determine the level of MHC-II by mediating the recognition of degron at the P/S/T domain of CIITA leading to its ubiquitination and subsequent degradation via the proteasome. Participates in the antiviral repsonse by initiating the activation of TBK1-IRF3-IFN-I axis. Mediates the 'Lys-63'-linked ubiquitination of TRAF3 to strengthen the interaction between TRAF3 and TBK1. The protein is F-box only protein 11 of Homo sapiens (Human).